Reading from the N-terminus, the 403-residue chain is MTTLDESLALIGRGAEEILKLDQLEARLTSGVPLRVKAGFDPTAPDLHLGHTVLLNKMRQFQQLGHQVIFLIGDFTGMIGDPSGKNATRKPLSREDVLANARTYEEQVFKILDRERTEVRFNSEWFGQMSAADMIKLSAQHTVARMLERDDFAKRFGSQQPIAIHEFLYPLVQGYDSVALRADVELGGTDQKFNLLMGRGLQEHYGQAPQIVLTMPLLEGLEGVAKMSKSLGNYIGINEPAIDIVTKTMKIGDELTWRWIDLLSLDISVAEAVRLKEQVTSGELHPREVKLRLARELATRFHDAATAEQAIAGWHAVVTGQGDTSLLPLQEVVVPAEGLRIASLLTAAGLTPSNSEATRKLKERAVKIDGEVLEDATRVFTQGFEGVIQVGKRNFARVSLVIG.

A 'HIGH' region motif is present at residues 42–51 (PTAPDLHLGH). The 'KMSKS' region motif lies at 226-230 (KMSKS). Lysine 229 contacts ATP. The S4 RNA-binding domain occupies 339–400 (LRIASLLTAA…GKRNFARVSL (62 aa)).

This sequence belongs to the class-I aminoacyl-tRNA synthetase family. TyrS type 2 subfamily. As to quaternary structure, homodimer.

The protein resides in the cytoplasm. It catalyses the reaction tRNA(Tyr) + L-tyrosine + ATP = L-tyrosyl-tRNA(Tyr) + AMP + diphosphate + H(+). Its function is as follows. Catalyzes the attachment of tyrosine to tRNA(Tyr) in a two-step reaction: tyrosine is first activated by ATP to form Tyr-AMP and then transferred to the acceptor end of tRNA(Tyr). The polypeptide is Tyrosine--tRNA ligase (Xanthomonas oryzae pv. oryzae (strain MAFF 311018)).